Here is a 205-residue protein sequence, read N- to C-terminus: Large ribosomal subunit protein bL25 (205 aa).

It belongs to the bacterial ribosomal protein bL25 family. CTC subfamily. In terms of assembly, part of the 50S ribosomal subunit; part of the 5S rRNA/L5/L18/L25 subcomplex. Contacts the 5S rRNA. Binds to the 5S rRNA independently of L5 and L18.

In terms of biological role, this is one of the proteins that binds to the 5S RNA in the ribosome where it forms part of the central protuberance. In Bartonella bacilliformis (strain ATCC 35685 / KC583 / Herrer 020/F12,63), this protein is Large ribosomal subunit protein bL25.